The chain runs to 147 residues: uncharacterized protein (147 aa).

The first 21 residues, 1-21 (MRTIFVGVLLLAIMGEGRLCA), serve as a signal peptide directing secretion.

This is an uncharacterized protein from Treponema pallidum (strain Nichols).